The following is a 265-amino-acid chain: MEENEQNNREVEPQQESGEESNRGILHQAPPGNHQPHHRITNFFIDNILRPEFGRRKEGISHQDELYTERDTGALSGAESGHHRVNVPEGAGGSSKVITVTGEKKSDLAMEETLKSRGLNGDHSLSSDSDSSQTSSKATQQPMLWPAWVYCTRYSDRPSSGPRSRKPKKKSVSKEDKRPRTAFTADQLQRLKAEFQTNRYLTEQRRQSLAQELSLNESQIKIWFQNKRAKIKKATGNKNSLALHLMAQGLYNHSTTSKDGKSDSE.

Basic and acidic residues-rich tracts occupy residues 1–12 and 102–115; these read MEENEQNNREVE and GEKK…ETLK. Disordered regions lie at residues 1 to 38, 75 to 140, and 156 to 181; these read MEEN…QPHH, LSGA…KATQ, and DRPS…RPRT. A compositionally biased stretch (low complexity) spans 122-136; sequence DHSLSSDSDSSQTSS. The segment at residues 176–235 is a DNA-binding region (homeobox); the sequence is DKRPRTAFTADQLQRLKAEFQTNRYLTEQRRQSLAQELSLNESQIKIWFQNKRAKIKKAT.

It belongs to the engrailed homeobox family.

The protein resides in the nucleus. The protein is Homeobox protein engrailed-2-A (en2-a) of Xenopus laevis (African clawed frog).